The primary structure comprises 210 residues: Large ribosomal subunit protein uL3 (210 aa).

The protein belongs to the universal ribosomal protein uL3 family. In terms of assembly, part of the 50S ribosomal subunit. Forms a cluster with proteins L14 and L19.

Functionally, one of the primary rRNA binding proteins, it binds directly near the 3'-end of the 23S rRNA, where it nucleates assembly of the 50S subunit. The protein is Large ribosomal subunit protein uL3 of Solibacter usitatus (strain Ellin6076).